The following is an 802-amino-acid chain: Copper-exporting P-type ATPase (802 aa).

2 consecutive HMA domains span residues 5-70 (KKTT…YGVT) and 72-138 (ETVE…YDAS). Residues Cys-16, Cys-19, Cys-83, and Cys-86 each contribute to the Cu(+) site. 6 helical membrane passes run 161–181 (LIIS…HLFN), 192–212 (WFQF…FYVG), 224–244 (MDVL…YEMV), 256–276 (LYFE…YLEA), 411–431 (YFVP…ITLV), and 438–458 (PALV…LGLA). Asp-495 functions as the 4-aspartylphosphate intermediate in the catalytic mechanism. Asp-690 and Asp-694 together coordinate Mg(2+). 2 consecutive transmembrane segments (helical) span residues 748 to 767 (LFWA…LGLL) and 771 to 790 (VAGA…ALRL).

It belongs to the cation transport ATPase (P-type) (TC 3.A.3) family. Type IB subfamily.

It is found in the cell membrane. It carries out the reaction Cu(+)(in) + ATP + H2O = Cu(+)(out) + ADP + phosphate + H(+). Functionally, involved in copper export. The chain is Copper-exporting P-type ATPase (copA) from Staphylococcus aureus (strain N315).